A 558-amino-acid polypeptide reads, in one-letter code: Urease subunit alpha 2 (558 aa).

The Urease domain occupies 129-558 (GAVDTHVHLL…SVSLNRLYFL (430 aa)). The Ni(2+) site is built by H134, H136, and K214. An N6-carboxylysine modification is found at K214. H216 lines the substrate pocket. Residues H243 and H269 each contribute to the Ni(2+) site. Catalysis depends on H317, which acts as the Proton donor. D357 provides a ligand contact to Ni(2+).

It belongs to the metallo-dependent hydrolases superfamily. Urease alpha subunit family. As to quaternary structure, may form a heterohexamer of 3 UreC (alpha) and 3 UreAB (gamma/beta) subunits. May also form a heterotrimer of UreA (gamma), UreB (beta) and UreC (alpha) subunits. Three heterotrimers associate to form the active enzyme. Ni cation serves as cofactor. Post-translationally, carboxylation allows a single lysine to coordinate two nickel ions.

It is found in the cytoplasm. The catalysed reaction is urea + 2 H2O + H(+) = hydrogencarbonate + 2 NH4(+). The protein operates within nitrogen metabolism; urea degradation; CO(2) and NH(3) from urea (urease route): step 1/1. This chain is Urease subunit alpha 2, found in Streptomyces coelicolor (strain ATCC BAA-471 / A3(2) / M145).